The following is a 125-amino-acid chain: Large ribosomal subunit protein bL12 (125 aa).

Belongs to the bacterial ribosomal protein bL12 family. As to quaternary structure, homodimer. Part of the ribosomal stalk of the 50S ribosomal subunit. Forms a multimeric L10(L12)X complex, where L10 forms an elongated spine to which 2 to 4 L12 dimers bind in a sequential fashion. Binds GTP-bound translation factors.

In terms of biological role, forms part of the ribosomal stalk which helps the ribosome interact with GTP-bound translation factors. Is thus essential for accurate translation. The protein is Large ribosomal subunit protein bL12 of Francisella tularensis subsp. novicida (strain U112).